The chain runs to 171 residues: 16S rRNA aminocarboxypropyltransferase (171 aa).

Residues Thr-18, Leu-68, Leu-91, and Ser-110 each contribute to the S-adenosyl-L-methionine site.

Belongs to the TDD superfamily. TSR3 family.

It localises to the cytoplasm. The catalysed reaction is an N(1)-methylpseudouridine in rRNA + S-adenosyl-L-methionine = N(1)-methyl-N(3)-[(3S)-3-amino-3-carboxypropyl]pseudouridine in rRNA + S-methyl-5'-thioadenosine + H(+). In terms of biological role, aminocarboxypropyltransferase that catalyzes the aminocarboxypropyl transfer on pseudouridine corresponding to position 914 in M.jannaschii 16S rRNA. It constitutes the last step in biosynthesis of the hypermodified N1-methyl-N3-(3-amino-3-carboxypropyl) pseudouridine (m1acp3-Psi). In Methanosphaera stadtmanae (strain ATCC 43021 / DSM 3091 / JCM 11832 / MCB-3), this protein is 16S rRNA aminocarboxypropyltransferase.